The chain runs to 221 residues: MNVFSQTQRYKALFWLSLFHLLVITSSNYLVQLPVSILGFHTTWGAFSFPFIFLATDLTVRIFGAPLARRIIFAVMIPALLISYVISSLFYMGSWQGFGALAHFNLFVARIATASFMAYALGQILDVHVFNRLRQSRRWWLAPTASTLFGNVSDTLAFFFIAFWRSPDAFMAEHWMEIALVDYCFKVLISIVFFLPMYGVLLNMLLKRLADKSEINALQAS.

At 1–12 (MNVFSQTQRYKA) the chain is on the cytoplasmic side. Residues 13-33 (LFWLSLFHLLVITSSNYLVQL) form a helical membrane-spanning segment. Proline 34 is a topological domain (periplasmic). Residues 35-55 (VSILGFHTTWGAFSFPFIFLA) traverse the membrane as a helical segment. Residues 56–70 (TDLTVRIFGAPLARR) lie on the Cytoplasmic side of the membrane. The helical transmembrane segment at 71 to 91 (IIFAVMIPALLISYVISSLFY) threads the bilayer. The Periplasmic portion of the chain corresponds to 92–97 (MGSWQG). The chain crosses the membrane as a helical span at residues 98–118 (FGALAHFNLFVARIATASFMA). The Cytoplasmic segment spans residues 119–143 (YALGQILDVHVFNRLRQSRRWWLAP). The helical transmembrane segment at 144–164 (TASTLFGNVSDTLAFFFIAFW) threads the bilayer. The Periplasmic portion of the chain corresponds to 165 to 184 (RSPDAFMAEHWMEIALVDYC). Residues 185 to 205 (FKVLISIVFFLPMYGVLLNML) form a helical membrane-spanning segment. The Cytoplasmic segment spans residues 206-221 (LKRLADKSEINALQAS).

Belongs to the vitamin uptake transporter (VUT/ECF) (TC 2.A.88) family. Q precursor transporter subfamily.

Its subcellular location is the cell inner membrane. In terms of biological role, involved in the import of queuosine (Q) precursors, required for Q precursor salvage. Transports 7-cyano-7-deazaguanine (preQ(0)) and 7-aminomethyl-7-deazaguanine (preQ(1)), with a preference for preQ(0). The chain is Queuosine precursor transporter (yhhQ) from Escherichia coli (strain K12).